A 445-amino-acid polypeptide reads, in one-letter code: Phosphoglucosamine mutase (445 aa).

Ser-102 (phosphoserine intermediate) is an active-site residue. Residues Ser-102, Asp-241, Asp-243, and Asp-245 each contribute to the Mg(2+) site. At Ser-102 the chain carries Phosphoserine.

The protein belongs to the phosphohexose mutase family. It depends on Mg(2+) as a cofactor. Activated by phosphorylation.

The enzyme catalyses alpha-D-glucosamine 1-phosphate = D-glucosamine 6-phosphate. Functionally, catalyzes the conversion of glucosamine-6-phosphate to glucosamine-1-phosphate. The sequence is that of Phosphoglucosamine mutase from Acinetobacter baumannii (strain AB0057).